A 63-amino-acid polypeptide reads, in one-letter code: Large ribosomal subunit protein bL28 (63 aa).

Belongs to the bacterial ribosomal protein bL28 family.

This chain is Large ribosomal subunit protein bL28, found in Alkaliphilus metalliredigens (strain QYMF).